The sequence spans 428 residues: MRYTKSEEAMKVAETLMPGGVNSPVRAFKSVDTPAIFMDHGKGSKIYDIDGNEYIDYVLSWGPLILGHRDPQVISHLHEAIDKGTSFGASTLLENKLAQLVIDRVPSIEKVRMVSSGTEATLDTLRLARGYTGRNKIVKFEGCYHGHSDSLLIKAGSGVATLGLPDSPGVPEGIAKNTITVPYNDLDALKIAFEKFGDDIAGVIVEPVAGNMGVVPPIEGFLQGLRDITTEYGALLIFDEVMTGFRVGYHCAQGYFGVTPDLTCLGKVIGGGLPVGAFGGKKEIMDHIAPLGNIYQAGTLSGNPLAMTSGYETLSQLTPETYEYFNMLGDILEDGLKRVFAKHNVPITVNRAGSMIGYFLNEGPVTNFEQANKSDLKLFAEMYREMAKEGVFLPPSQFEGTFLSTAHTKEDIEKTIQAFDTALSRIVK.

Lys-267 is modified (N6-(pyridoxal phosphate)lysine).

The protein belongs to the class-III pyridoxal-phosphate-dependent aminotransferase family. HemL subfamily. In terms of assembly, homodimer. It depends on pyridoxal 5'-phosphate as a cofactor.

It is found in the cytoplasm. The enzyme catalyses (S)-4-amino-5-oxopentanoate = 5-aminolevulinate. It participates in porphyrin-containing compound metabolism; protoporphyrin-IX biosynthesis; 5-aminolevulinate from L-glutamyl-tRNA(Glu): step 2/2. The sequence is that of Glutamate-1-semialdehyde 2,1-aminomutase 1 from Staphylococcus aureus (strain Mu3 / ATCC 700698).